The chain runs to 298 residues: MARKKGREIHGWLIVDKPAGIGSTDVVGKVRWALDAKKAGHAGTLDPDATGVLAVALGEATKTVPILTDALKAYDFTVSWGAETSTDDASGGVVKTSDARPDEAAIRAALPEFTGEIMQVPPAVSAVRVDGARAYDLAREGEVVELAARPLWVESLELLGAARDSAELRMVCGKGGYVRSIARDLGRKLGCLGHVAQLRRIWSGPFEAGDGFAFDRIDRANQAEIEAALLPLQAALADLPEMQATEIGATRILNGNPGQVLGHAEFGEEVWVSRNGRALCIGRYMGGEVQPSRVFNLG.

Aspartate 46 functions as the Nucleophile in the catalytic mechanism.

This sequence belongs to the pseudouridine synthase TruB family. Type 1 subfamily.

It carries out the reaction uridine(55) in tRNA = pseudouridine(55) in tRNA. Its function is as follows. Responsible for synthesis of pseudouridine from uracil-55 in the psi GC loop of transfer RNAs. This Paracoccus denitrificans (strain Pd 1222) protein is tRNA pseudouridine synthase B.